The sequence spans 173 residues: Gonadotropin inhibitory hormone peptides (173 aa).

The first 26 residues, 1-26 (MEIISTQKFILLTLATVAFLTPHGAC), serve as a signal peptide directing secretion. Positions 27–82 (LDELMKSSLESREDDDDKYYETKDSILEEKQRSLNFEEMKDWGSKNFMKVNTPTVN) are excised as a propeptide. A Phenylalanine amide modification is found at phenylalanine 95. Positions 98–103 (SNPEER) are excised as a propeptide. Phenylalanine 115 carries the phenylalanine amide modification. Residues 118–140 (AFGESLSRRAPNLSNRSGRSPLA) constitute a propeptide that is removed on maturation. Residue phenylalanine 154 is modified to Phenylalanine amide. A propeptide spanning residues 157–173 (SVPISLSQGVQESEPGM) is cleaved from the precursor.

It belongs to the FARP (FMRFamide related peptide) family. Specifically expressed in the diencephalon.

The protein resides in the secreted. Functionally, hypothalamic factor, responsible for the negative regulation of gonadotropin secretion. The protein is Gonadotropin inhibitory hormone peptides (GNIH) of Coturnix japonica (Japanese quail).